The following is a 401-amino-acid chain: Chalcone synthase 4 (401 aa).

Residue Cys168 is part of the active site.

Belongs to the thiolase-like superfamily. Chalcone/stilbene synthases family.

The enzyme catalyses (E)-4-coumaroyl-CoA + 3 malonyl-CoA + 3 H(+) = 2',4,4',6'-tetrahydroxychalcone + 3 CO2 + 4 CoA. Its pathway is secondary metabolite biosynthesis; flavonoid biosynthesis. In terms of biological role, the primary product of this enzyme is 4,2',4',6'-tetrahydroxychalcone (also termed naringenin-chalcone or chalcone) which can under specific conditions spontaneously isomerize into naringenin. The chain is Chalcone synthase 4 (CHS4) from Sorghum bicolor (Sorghum).